The primary structure comprises 681 residues: DNA ligase (681 aa).

Residues 44-48, 94-95, and E124 each bind NAD(+); these read DYIYD and SL. K126 (N6-AMP-lysine intermediate) is an active-site residue. NAD(+) contacts are provided by R147, E181, K297, and K321. Zn(2+) contacts are provided by C415, C418, C433, and C438. One can recognise a BRCT domain in the interval 598 to 681; the sequence is DETSFFYGKK…EAQAKEGTDK (84 aa).

The protein belongs to the NAD-dependent DNA ligase family. LigA subfamily. Mg(2+) is required as a cofactor. Mn(2+) serves as cofactor.

It carries out the reaction NAD(+) + (deoxyribonucleotide)n-3'-hydroxyl + 5'-phospho-(deoxyribonucleotide)m = (deoxyribonucleotide)n+m + AMP + beta-nicotinamide D-nucleotide.. Functionally, DNA ligase that catalyzes the formation of phosphodiester linkages between 5'-phosphoryl and 3'-hydroxyl groups in double-stranded DNA using NAD as a coenzyme and as the energy source for the reaction. It is essential for DNA replication and repair of damaged DNA. This Leuconostoc citreum (strain KM20) protein is DNA ligase.